A 327-amino-acid polypeptide reads, in one-letter code: Probable cell division protein WhiA (327 aa).

The segment at residues 275-308 (SLEELGRLADPVMTKDAVAGRIRRLLSMADRKAK) is a DNA-binding region (H-T-H motif). A disordered region spans residues 307 to 327 (AKTEGIPDTESAVTPELLEEA).

It belongs to the WhiA family.

In terms of biological role, involved in cell division and chromosome segregation. This chain is Probable cell division protein WhiA, found in Mycobacteroides abscessus (strain ATCC 19977 / DSM 44196 / CCUG 20993 / CIP 104536 / JCM 13569 / NCTC 13031 / TMC 1543 / L948) (Mycobacterium abscessus).